We begin with the raw amino-acid sequence, 358 residues long: CRS2-associated factor 2, mitochondrial (358 aa).

A mitochondrion-targeting transit peptide spans 1 to 28; that stretch reads MLSIRRSLTLAKEPKDLFLFLCNLRARC. A disordered region spans residues 35–64; it reads DPPFSPLSKPTKPPKEKKKQKTKKQDQSSE. 2 consecutive CRM domains span residues 141–239 and 261–357; these read ETLT…SRPI and DGLE…ELVT.

As to quaternary structure, part of large ribonucleo-protein complexes that include group IIB introns.

It localises to the mitochondrion. May be involved in the splicing of group IIB introns in mitochondria. This Arabidopsis thaliana (Mouse-ear cress) protein is CRS2-associated factor 2, mitochondrial.